Here is a 43-residue protein sequence, read N- to C-terminus: Myotoxin-2 (43 aa).

3 disulfide bridges follow: Cys4-Cys36, Cys11-Cys30, and Cys18-Cys37.

This sequence belongs to the crotamine-myotoxin family. Monomer. Expressed by the venom gland.

Its subcellular location is the secreted. Cationic peptide that possesses multiple functions. It acts as a cell-penetrating peptide (CPP), and as a potent voltage-gated potassium channel (Kv) inhibitor. It exhibits antimicrobial activities, hind limb paralysis, and severe muscle necrosis by a non-enzymatic mechanism. The protein is Myotoxin-2 of Crotalus concolor (Midget faded rattlesnake).